A 185-amino-acid polypeptide reads, in one-letter code: ATP synthase subunit b, chloroplastic (185 aa).

Residues 7 to 29 form a helical membrane-spanning segment; that stretch reads SFVYLVGHCPFAGSFAFNTDILA.

The protein belongs to the ATPase B chain family. In terms of assembly, F-type ATPases have 2 components, F(1) - the catalytic core - and F(0) - the membrane proton channel. F(1) has five subunits: alpha(3), beta(3), gamma(1), delta(1), epsilon(1). F(0) has four main subunits: a(1), b(1), b'(1) and c(10-14). The alpha and beta chains form an alternating ring which encloses part of the gamma chain. F(1) is attached to F(0) by a central stalk formed by the gamma and epsilon chains, while a peripheral stalk is formed by the delta, b and b' chains.

The protein resides in the plastid. It is found in the chloroplast thylakoid membrane. Functionally, f(1)F(0) ATP synthase produces ATP from ADP in the presence of a proton or sodium gradient. F-type ATPases consist of two structural domains, F(1) containing the extramembraneous catalytic core and F(0) containing the membrane proton channel, linked together by a central stalk and a peripheral stalk. During catalysis, ATP synthesis in the catalytic domain of F(1) is coupled via a rotary mechanism of the central stalk subunits to proton translocation. Component of the F(0) channel, it forms part of the peripheral stalk, linking F(1) to F(0). The polypeptide is ATP synthase subunit b, chloroplastic (Dioscorea elephantipes (Elephant's foot yam)).